Reading from the N-terminus, the 405-residue chain is Tyrosine--tRNA ligase (405 aa).

The 'HIGH' region signature appears at 48 to 57; the sequence is PTAPDLHLGH. A 'KMSKS' region motif is present at residues 232–236; the sequence is KMSKS. Lys235 is a binding site for ATP. Positions 343–404 constitute an S4 RNA-binding domain; it reads IWLPKLLADA…GKRRFVKVIF (62 aa).

It belongs to the class-I aminoacyl-tRNA synthetase family. TyrS type 2 subfamily. As to quaternary structure, homodimer.

Its subcellular location is the cytoplasm. It catalyses the reaction tRNA(Tyr) + L-tyrosine + ATP = L-tyrosyl-tRNA(Tyr) + AMP + diphosphate + H(+). In terms of biological role, catalyzes the attachment of tyrosine to tRNA(Tyr) in a two-step reaction: tyrosine is first activated by ATP to form Tyr-AMP and then transferred to the acceptor end of tRNA(Tyr). The sequence is that of Tyrosine--tRNA ligase from Desulfotalea psychrophila (strain LSv54 / DSM 12343).